Here is a 191-residue protein sequence, read N- to C-terminus: Repressor Rok (191 aa).

Residues 2 to 43 (FNEREALRLRLEQLNEAEVKVIREYQIERDKIYAKLRELDRN) are a coiled coil. The segment covering 75-96 (SYQPQSQQQSVQPQLQSISSLP) has biased composition (low complexity). The segment at 75–116 (SYQPQSQQQSVQPQLQSISSLPAGIPDGTTRRRRGTARPGSK) is disordered. The tract at residues 95 to 191 (LPAGIPDGTT…EIESAESANE (97 aa)) is DNA-binding.

It localises to the cytoplasm. It is found in the nucleoid. Repressor of comK, the master regulator of competence development. Overexpression seems to be lethal. Represses at least 20 genes that specify membrane-localized and secreted proteins, including some that encode products with antibiotic activity. Binds to many AT-rich sites in the chromosome, many of which are known or thought to derive from horizontal gene transfer; helps keep mobile element ICEBs1 quiescent in the genome. Binds to its own promoter and is thus probably autoregulatory. This is Repressor Rok from Bacillus subtilis (strain 168).